Reading from the N-terminus, the 344-residue chain is Ribosomal RNA large subunit methyltransferase Cfr (344 aa).

The active-site Proton acceptor is the Glu-88. The region spanning 95-324 (KKGWESFCIS…HANGISVATR (230 aa)) is the Radical SAM core domain. The cysteines at positions 102 and 335 are disulfide-linked. Positions 109, 113, and 116 each coordinate [4Fe-4S] cluster. S-adenosyl-L-methionine-binding positions include 155–156 (GE), Ser-186, 209–211 (SLH), and Asn-290. Cys-335 serves as the catalytic S-methylcysteine intermediate.

This sequence belongs to the radical SAM superfamily. RlmN family. Cfr subfamily. [4Fe-4S] cluster is required as a cofactor.

The protein localises to the cytoplasm. It carries out the reaction adenosine(2503) in 23S rRNA + 2 reduced [2Fe-2S]-[ferredoxin] + 2 S-adenosyl-L-methionine = 8-methyladenosine(2503) in 23S rRNA + 5'-deoxyadenosine + L-methionine + 2 oxidized [2Fe-2S]-[ferredoxin] + S-adenosyl-L-homocysteine. Its function is as follows. Specifically methylates position 8 of adenine 2503 in 23S rRNA. Confers resistance to some classes of antibiotics. The sequence is that of Ribosomal RNA large subunit methyltransferase Cfr from Lachnoclostridium phytofermentans (strain ATCC 700394 / DSM 18823 / ISDg) (Clostridium phytofermentans).